The sequence spans 96 residues: Ubiquitin-related modifier 1 (96 aa).

The residue at position 96 (glycine 96) is a 1-thioglycine. Glycine 96 is covalently cross-linked (Glycyl lysine isopeptide (Gly-Lys) (interchain with K-? in acceptor proteins)).

Belongs to the URM1 family. C-terminal thiocarboxylation occurs in 2 steps, it is first acyl-adenylated (-COAMP) via the hesA/moeB/thiF part of UBA4, then thiocarboxylated (-COSH) via the rhodanese domain of UBA4.

Its subcellular location is the cytoplasm. Its pathway is tRNA modification; 5-methoxycarbonylmethyl-2-thiouridine-tRNA biosynthesis. Functionally, acts as a sulfur carrier required for 2-thiolation of mcm(5)S(2)U at tRNA wobble positions of cytosolic tRNA(Lys), tRNA(Glu) and tRNA(Gln). Serves as sulfur donor in tRNA 2-thiolation reaction by being thiocarboxylated (-COSH) at its C-terminus by the MOCS3 homolog UBA4. The sulfur is then transferred to tRNA to form 2-thiolation of mcm(5)S(2)U. Prior mcm(5) tRNA modification by the elongator complex is required for 2-thiolation. Also acts as a ubiquitin-like protein (UBL) that is covalently conjugated via an isopeptide bond to lysine residues of target proteins such as AHP1. The thiocarboxylated form serves as substrate for conjugation and oxidative stress specifically induces the formation of UBL-protein conjugates. This is Ubiquitin-related modifier 1 from Encephalitozoon cuniculi (strain GB-M1) (Microsporidian parasite).